We begin with the raw amino-acid sequence, 140 residues long: PDZ domain-containing protein 11 (140 aa).

Residues 47–129 (TVVLKKPPGA…ITMRVRYFPY (83 aa)) form the PDZ domain.

It localises to the cytoplasm. The polypeptide is PDZ domain-containing protein 11 (PDZD11) (Gallus gallus (Chicken)).